The following is a 34-amino-acid chain: Photosystem II reaction center protein Psb30 (34 aa).

The helical transmembrane segment at 6–26 (VIGQLTSLAMIVLVGPAVIVV) threads the bilayer.

Belongs to the Psb30/Ycf12 family. PSII is composed of 1 copy each of membrane proteins PsbA, PsbB, PsbC, PsbD, PsbE, PsbF, PsbH, PsbI, PsbJ, PsbK, PsbL, PsbM, PsbT, PsbX, PsbY, PsbZ, Psb30/Ycf12, peripheral proteins of the oxygen-evolving complex and a large number of cofactors. It forms dimeric complexes.

It is found in the plastid. It localises to the chloroplast thylakoid membrane. A core subunit of photosystem II (PSII), probably helps stabilize the reaction center. This chain is Photosystem II reaction center protein Psb30, found in Gracilaria tenuistipitata var. liui (Red alga).